Consider the following 103-residue polypeptide: uncharacterized protein (103 aa).

This is an uncharacterized protein from Pseudescherichia vulneris (Escherichia vulneris).